Here is a 428-residue protein sequence, read N- to C-terminus: Serine--tRNA ligase (428 aa).

Residue 235–237 coordinates L-serine; it reads TAE. 266–268 is an ATP binding site; that stretch reads RSE. Glu-289 provides a ligand contact to L-serine. Position 353-356 (353-356) interacts with ATP; it reads EISS. Ser-389 is a binding site for L-serine.

It belongs to the class-II aminoacyl-tRNA synthetase family. Type-1 seryl-tRNA synthetase subfamily. In terms of assembly, homodimer. The tRNA molecule binds across the dimer.

It is found in the cytoplasm. The catalysed reaction is tRNA(Ser) + L-serine + ATP = L-seryl-tRNA(Ser) + AMP + diphosphate + H(+). It carries out the reaction tRNA(Sec) + L-serine + ATP = L-seryl-tRNA(Sec) + AMP + diphosphate + H(+). Its pathway is aminoacyl-tRNA biosynthesis; selenocysteinyl-tRNA(Sec) biosynthesis; L-seryl-tRNA(Sec) from L-serine and tRNA(Sec): step 1/1. Its function is as follows. Catalyzes the attachment of serine to tRNA(Ser). Is also able to aminoacylate tRNA(Sec) with serine, to form the misacylated tRNA L-seryl-tRNA(Sec), which will be further converted into selenocysteinyl-tRNA(Sec). This is Serine--tRNA ligase from Shewanella piezotolerans (strain WP3 / JCM 13877).